The chain runs to 887 residues: Alanine--tRNA ligase (887 aa).

Residues H581, H585, C683, and H687 each coordinate Zn(2+).

This sequence belongs to the class-II aminoacyl-tRNA synthetase family. The cofactor is Zn(2+).

The protein localises to the cytoplasm. It catalyses the reaction tRNA(Ala) + L-alanine + ATP = L-alanyl-tRNA(Ala) + AMP + diphosphate. Functionally, catalyzes the attachment of alanine to tRNA(Ala) in a two-step reaction: alanine is first activated by ATP to form Ala-AMP and then transferred to the acceptor end of tRNA(Ala). Also edits incorrectly charged Ser-tRNA(Ala) and Gly-tRNA(Ala) via its editing domain. The chain is Alanine--tRNA ligase from Ehrlichia canis (strain Jake).